Consider the following 305-residue polypeptide: Sulfate adenylyltransferase subunit 2 (305 aa).

This sequence belongs to the PAPS reductase family. CysD subfamily. Heterodimer composed of CysD, the smaller subunit, and CysN.

The catalysed reaction is sulfate + ATP + H(+) = adenosine 5'-phosphosulfate + diphosphate. It functions in the pathway sulfur metabolism; hydrogen sulfide biosynthesis; sulfite from sulfate: step 1/3. With CysN forms the ATP sulfurylase (ATPS) that catalyzes the adenylation of sulfate producing adenosine 5'-phosphosulfate (APS) and diphosphate, the first enzymatic step in sulfur assimilation pathway. APS synthesis involves the formation of a high-energy phosphoric-sulfuric acid anhydride bond driven by GTP hydrolysis by CysN coupled to ATP hydrolysis by CysD. The polypeptide is Sulfate adenylyltransferase subunit 2 (Pseudomonas savastanoi pv. phaseolicola (strain 1448A / Race 6) (Pseudomonas syringae pv. phaseolicola (strain 1448A / Race 6))).